We begin with the raw amino-acid sequence, 278 residues long: MGIRKYKPTTPGRRGSSVSDFVELTRSTPEKSLLVAKPKTGGRNNTGRITTRHIGGGHKQAYRIIDFKRYDKDGVPAKVAHIEYDPNRTARIALLHYADGEKRYIIAPDGVGQGTVVVSGPEADIKPGNNLPLRNIPVGTTVHAVELRPGGGAKMGRSAGASVQLVAREGKYATVRLPSGEMRMVDIRCRATIGEVGNAEQININWGKAGRNRWKGIRPTVRGVVMNPIDHPHGGGEGRTSGGRHPVSPWGKPEGRTRNKKKASSRLIVRRRKSGKKR.

Disordered stretches follow at residues 1–20 and 225–278; these read MGIR…SVSD and VMNP…GKKR. The span at 258–278 shows a compositional bias: basic residues; it reads RNKKKASSRLIVRRRKSGKKR.

This sequence belongs to the universal ribosomal protein uL2 family. In terms of assembly, part of the 50S ribosomal subunit. Forms a bridge to the 30S subunit in the 70S ribosome.

Its function is as follows. One of the primary rRNA binding proteins. Required for association of the 30S and 50S subunits to form the 70S ribosome, for tRNA binding and peptide bond formation. It has been suggested to have peptidyltransferase activity; this is somewhat controversial. Makes several contacts with the 16S rRNA in the 70S ribosome. The polypeptide is Large ribosomal subunit protein uL2 (Cutibacterium acnes (strain DSM 16379 / KPA171202) (Propionibacterium acnes)).